A 175-amino-acid chain; its full sequence is MTRNPQPDRSKTAPKNAKRDPVASGERDASVNRAASHNYFLLDKYEAGVALRGTEVKSIRDGRANLKDAYGLVKENELWLINAHIGPYDAASYNNHAPLRTRKLLVKKREILKLLAASQQKGHTLIPTRMYFKNGRVKVELAVAKGKQLWDKRETDRRKTADRDAREAIARSRKS.

Disordered regions lie at residues 1–29 (MTRN…ERDA) and 152–175 (KRET…SRKS).

It belongs to the SmpB family.

It localises to the cytoplasm. Required for rescue of stalled ribosomes mediated by trans-translation. Binds to transfer-messenger RNA (tmRNA), required for stable association of tmRNA with ribosomes. tmRNA and SmpB together mimic tRNA shape, replacing the anticodon stem-loop with SmpB. tmRNA is encoded by the ssrA gene; the 2 termini fold to resemble tRNA(Ala) and it encodes a 'tag peptide', a short internal open reading frame. During trans-translation Ala-aminoacylated tmRNA acts like a tRNA, entering the A-site of stalled ribosomes, displacing the stalled mRNA. The ribosome then switches to translate the ORF on the tmRNA; the nascent peptide is terminated with the 'tag peptide' encoded by the tmRNA and targeted for degradation. The ribosome is freed to recommence translation, which seems to be the essential function of trans-translation. This chain is SsrA-binding protein, found in Koribacter versatilis (strain Ellin345).